We begin with the raw amino-acid sequence, 147 residues long: uncharacterized protein (147 aa).

Positions glycine 30–phenylalanine 102 are disordered. Polar residues predominate over residues arginine 62–glutamine 71.

This is an uncharacterized protein from Homo sapiens (Human).